The following is a 92-amino-acid chain: Small ribosomal subunit protein uS19c (92 aa).

It belongs to the universal ribosomal protein uS19 family.

Its subcellular location is the plastid. The protein resides in the chloroplast. Its function is as follows. Protein S19 forms a complex with S13 that binds strongly to the 16S ribosomal RNA. This chain is Small ribosomal subunit protein uS19c, found in Oedogonium cardiacum (Filamentous green alga).